A 314-amino-acid polypeptide reads, in one-letter code: Type II methyltransferase M.HpaI (314 aa).

The protein belongs to the N(4)/N(6)-methyltransferase family.

It carries out the reaction a 2'-deoxyadenosine in DNA + S-adenosyl-L-methionine = an N(6)-methyl-2'-deoxyadenosine in DNA + S-adenosyl-L-homocysteine + H(+). Functionally, a beta subtype methylase that recognizes the double-stranded sequence 5'-GTTAAC-3', methylates A-5 on both strands, and protects the DNA from cleavage by the HpaI endonuclease. This is Type II methyltransferase M.HpaI (hpaIM) from Haemophilus parainfluenzae.